The following is a 417-amino-acid chain: Serine hydroxymethyltransferase (417 aa).

(6S)-5,6,7,8-tetrahydrofolate contacts are provided by residues Leu-121 and 125–127; that span reads GHL. The residue at position 229 (Lys-229) is an N6-(pyridoxal phosphate)lysine. Residue 355–357 coordinates (6S)-5,6,7,8-tetrahydrofolate; it reads SPF.

Belongs to the SHMT family. In terms of assembly, homodimer. Requires pyridoxal 5'-phosphate as cofactor.

The protein localises to the cytoplasm. It carries out the reaction (6R)-5,10-methylene-5,6,7,8-tetrahydrofolate + glycine + H2O = (6S)-5,6,7,8-tetrahydrofolate + L-serine. Its pathway is one-carbon metabolism; tetrahydrofolate interconversion. The protein operates within amino-acid biosynthesis; glycine biosynthesis; glycine from L-serine: step 1/1. In terms of biological role, catalyzes the reversible interconversion of serine and glycine with tetrahydrofolate (THF) serving as the one-carbon carrier. This reaction serves as the major source of one-carbon groups required for the biosynthesis of purines, thymidylate, methionine, and other important biomolecules. Also exhibits THF-independent aldolase activity toward beta-hydroxyamino acids, producing glycine and aldehydes, via a retro-aldol mechanism. This chain is Serine hydroxymethyltransferase, found in Shewanella baltica (strain OS223).